Reading from the N-terminus, the 562-residue chain is MDDHKRPLYLPFAGPAILEAPLINKGSAFTDEERVFFNLEGLLPHVIETIEEQASRAYDQYTNFTNDLDKHIYLRNIQDTNETLYYRLVQNHITEMMPIIYTPTVGMACERFSKNYRRNRGLFISYPNKDRIDDLLNNSTRQKVKIIVVTDGERILGLGDQGIGGMGIPIGKLSLYTSCGGISPAYTLPITLDVGTDNPNLLEDPMYMGWRHQRIGGEEYTEFVEAFMQAVHRRWPDALIQFEDFAQKNAMPLLERYKDQYCCFNDDVQGTAAVTVGSLLAACKAAKTKLSEQRVTFLGAGSAGCGIAEAIVAQMIAEGLSEEQARAQVFMVDRWGLLQDNMPTLLPFQQKLAQKCDDIEGWDNFSENISLLDVVNNAKPTVLIGVSGAPGVFSEEIIKAMHSHCPRPIVFPLSNPTSRVEATPKDLLHWTKGQALVATGSPFEPVVVEDETFEIAQCNNSYIFPGIGLGVLAAGAKRVSNEMLMASSRALAECSPLALDGEGPLLPPLEEIHKVSKHIALAVGKVAIEQGHALPCTDELLEQSIEDNFWTAEYRRYKRTSF.

Y101 serves as the catalytic Proton donor. R154 is an NAD(+) binding site. Catalysis depends on K172, which acts as the Proton acceptor. A divalent metal cation-binding residues include E243, D244, and D267. Residues D267 and N415 each coordinate NAD(+).

Belongs to the malic enzymes family. In terms of assembly, homotetramer. It depends on Mg(2+) as a cofactor. The cofactor is Mn(2+).

The enzyme catalyses (S)-malate + NAD(+) = pyruvate + CO2 + NADH. The catalysed reaction is oxaloacetate + H(+) = pyruvate + CO2. This Shewanella sediminis (strain HAW-EB3) protein is NAD-dependent malic enzyme.